A 57-amino-acid polypeptide reads, in one-letter code: Large ribosomal subunit protein bL32c (57 aa).

It belongs to the bacterial ribosomal protein bL32 family.

Its subcellular location is the plastid. The protein localises to the chloroplast. This is Large ribosomal subunit protein bL32c from Nandina domestica (Heavenly bamboo).